We begin with the raw amino-acid sequence, 515 residues long: MAARLIGFFLFQAVSWAYGAQPCIPKSFGYSSVVCVCNASYCDSLDPVTLPALGTFSRYESTRRGRRMELSVGAIQANRTGTGLLLTLQPEKKFQKVKGFGGAMTDATALNILALSPPTQKLLLRSYFSTNGIEYNIIRVPMASCDFSIRVYTYADTPNDFQLSNFSLPEEDTKLKIPLIHQALKMSSRPISLFASPWTSPTWLKTNGRVNGKGSLKGQPGDIFHQTWANYFVKFLDAYAKYGLRFWAVTAENEPTAGLFTGYPFQCLGFTPEHQRDFISRDLGPALANSSHDVKLLMLDDQRLLLPRWAEVVLSDPEAAKYVHGIAVHWYMDFLAPAKATLGETHRLFPNTMLFASEACVGSKFWEQSVRLGSWDRGMQYSHSIITNLLYHVTGWTDWNLALNPEGGPNWVRNFVDSPIIVDIPKDAFYKQPMFYHLGHFSKFIPEGSQRVALVASESTDLETVALLRPDGSAVVVVLNRSSEDVPLTISDPDLGFLETVSPGYSIHTYLWRRQ.

An N-terminal signal peptide occupies residues 1–19; sequence MAARLIGFFLFQAVSWAYG. Cystine bridges form between cysteine 23–cysteine 35 and cysteine 37–cysteine 42. Residues asparagine 38 and asparagine 78 are each glycosylated (N-linked (GlcNAc...) asparagine). Asparagine 165 carries an N-linked (GlcNAc...) (high mannose) asparagine glycan. The active-site Proton donor is the glutamate 254. Asparagine 289 carries an N-linked (GlcNAc...) asparagine glycan. The Nucleophile role is filled by glutamate 358. An N-linked (GlcNAc...) asparagine glycan is attached at asparagine 480.

It belongs to the glycosyl hydrolase 30 family. In terms of assembly, interacts with saposin-C. Interacts with SCARB2. Interacts with TCP1. Interacts with GRN; this interaction prevents aggregation of GBA1-SCARB2 complex via interaction with HSPA1A upon stress.

Its subcellular location is the lysosome membrane. It carries out the reaction a beta-D-glucosyl-(1&lt;-&gt;1')-N-acylsphing-4-enine + H2O = an N-acylsphing-4-enine + D-glucose. The catalysed reaction is a beta-D-galactosyl-(1&lt;-&gt;1')-N-acylsphing-4-enine + H2O = an N-acylsphing-4-enine + D-galactose. The enzyme catalyses cholesteryl 3-beta-D-glucoside + H2O = cholesterol + D-glucose. It catalyses the reaction a beta-D-glucosyl-(1&lt;-&gt;1')-N-acylsphing-4-enine + cholesterol = cholesteryl 3-beta-D-glucoside + an N-acylsphing-4-enine. It carries out the reaction beta-D-glucosyl-(1&lt;-&gt;1')-N-hexadecanoylsphing-4-enine + cholesterol = cholesteryl 3-beta-D-glucoside + N-hexadecanoylsphing-4-enine. The catalysed reaction is beta-D-glucosyl-N-(9Z-octadecenoyl)-sphing-4E-enine + cholesterol = N-(9Z-octadecenoyl)-sphing-4-enine + cholesteryl 3-beta-D-glucoside. The enzyme catalyses beta-D-glucosyl-N-octanoylsphing-4E-enine + cholesterol = N-octanoylsphing-4-enine + cholesteryl 3-beta-D-glucoside. It catalyses the reaction beta-D-glucosyl-N-dodecanoylsphing-4-enine + cholesterol = N-dodecanoylsphing-4-enine + cholesteryl 3-beta-D-glucoside. It carries out the reaction beta-D-glucosyl-(1&lt;-&gt;1)-N-octadecanoylsphing-4-enine + cholesterol = N-octadecanoylsphing-4-enine + cholesteryl 3-beta-D-glucoside. The catalysed reaction is beta-D-glucosyl-(1&lt;-&gt;1')-N-(15Z-tetracosenoyl)-sphing-4-enine + cholesterol = N-(15Z-tetracosenoyl)-sphing-4-enine + cholesteryl 3-beta-D-glucoside. The enzyme catalyses a beta-D-galactosyl-(1&lt;-&gt;1')-N-acylsphing-4-enine + cholesterol = cholesteryl 3-beta-D-galactoside + an N-acylsphing-4-enine. It catalyses the reaction 1-(beta-D-galactosyl)-N-dodecanoylsphing-4-enine + cholesterol = cholesteryl 3-beta-D-galactoside + N-dodecanoylsphing-4-enine. It carries out the reaction a beta-D-xylosyl-(1&lt;-&gt;1')-N-acylsphing-4-enine + cholesterol = cholesteryl 3-beta-D-xyloside + an N-acylsphing-4-enine. The catalysed reaction is beta-D-xylosyl-(1&lt;-&gt;1')-N-(9Z-octadecenoyl)-sphing-4-enine + cholesterol = cholesteryl 3-beta-D-xyloside + N-(9Z-octadecenoyl)-sphing-4-enine. It functions in the pathway steroid metabolism; cholesterol metabolism. It participates in sphingolipid metabolism. With respect to regulation, inhibited by conduritol B epoxide/CBE. Its function is as follows. Glucosylceramidase that catalyzes, within the lysosomal compartment, the hydrolysis of glucosylceramides/GlcCers (such as beta-D-glucosyl-(1&lt;-&gt;1')-N-acylsphing-4-enine) into free ceramides (such as N-acylsphing-4-enine) and glucose. Plays a central role in the degradation of complex lipids and the turnover of cellular membranes. Through the production of ceramides, participates in the PKC-activated salvage pathway of ceramide formation. Catalyzes the glucosylation of cholesterol, through a transglucosylation reaction where glucose is transferred from GlcCer to cholesterol. GlcCer containing mono-unsaturated fatty acids (such as beta-D-glucosyl-N-(9Z-octadecenoyl)-sphing-4-enine) are preferred as glucose donors for cholesterol glucosylation when compared with GlcCer containing same chain length of saturated fatty acids (such as beta-D-glucosyl-N-octadecanoyl-sphing-4-enine). Under specific conditions, may alternatively catalyze the reverse reaction, transferring glucose from cholesteryl 3-beta-D-glucoside to ceramide. Can also hydrolyze cholesteryl 3-beta-D-glucoside producing glucose and cholesterol. Catalyzes the hydrolysis of galactosylceramides/GalCers (such as beta-D-galactosyl-(1&lt;-&gt;1')-N-acylsphing-4-enine), as well as the transfer of galactose between GalCers and cholesterol in vitro, but with lower activity than with GlcCers. Contrary to GlcCer and GalCer, xylosylceramide/XylCer (such as beta-D-xyosyl-(1&lt;-&gt;1')-N-acylsphing-4-enine) is not a good substrate for hydrolysis, however it is a good xylose donor for transxylosylation activity to form cholesteryl 3-beta-D-xyloside. In Mus musculus (Mouse), this protein is Lysosomal acid glucosylceramidase (Gba1).